A 226-amino-acid chain; its full sequence is DQVTTPQVVNHVNSNNQAQQMAQKLDQDSIQLRNIKDNVQGTDYEKPVNEAITSVEKLKTSLRANSETVYDLNSIGSRVEALTDVIEAITFSTQHLANKVSQANIDMGFGITKLVIRILDPFASVDSIKAQVNDVKALEQKVLTYPDLKPTDRATIYTKSKLDKEIWNTRFTRDKKVLNVKEFKVYNTLNKAITHAVGVQLNPNVTVQQVDQEIVTLQAALQTALK.

An igG constant region-binding region spans residues 37-100 (DNVQGTDYEK…FSTQHLANKV (64 aa)). 3 consecutive repeats follow at residues 158 to 168 (TKSKLDKEIWN), 169 to 179 (TRFTRDKKVLN), and 180 to 190 (VKEFKVYNTLN).

It localises to the secreted. Protein B belongs to the group of bacterial Fc-binding protein. The polypeptide is Protein B (Streptococcus agalactiae).